A 245-amino-acid chain; its full sequence is Zinc finger protein AZF1 (245 aa).

Polar residues predominate over residues 1 to 15; it reads MALETLNSPTATTTA. 2 disordered regions span residues 1–57 and 112–141; these read MALE…NKNL and LGGH…SHSN. The C2H2-type 1 zinc finger occupies 97–119; it reads YKCTVCGKSFSSYQALGGHKTSH. Positions 123-134 are enriched in polar residues; sequence TNTSITSGNQEL. The C2H2-type 2 zinc-finger motif lies at 164–186; it reads HTCSICFKSFASGQALGGHKRCH. The tract at residues 193–231 is disordered; the sequence is GNGNGSSSNSVELVAGSDVSDVDNERWSEESAIGGHRGF.

As to expression, highly expressed in roots and at lower levels in leaves and stems.

It localises to the nucleus. Functionally, transcriptional repressor involved in the inhibition of plant growth under abiotic stress conditions. Can repress the expression of various genes, including osmotic stress and abscisic acid-repressive genes and auxin-inducible genes, by binding to their promoter regions in a DNA sequence-specific manner. The polypeptide is Zinc finger protein AZF1 (AZF1) (Arabidopsis thaliana (Mouse-ear cress)).